The sequence spans 1119 residues: DNA-directed RNA polymerase subunit beta (1119 aa).

It belongs to the RNA polymerase beta chain family. As to quaternary structure, the RNAP catalytic core consists of 2 alpha, 1 beta, 1 beta' and 1 omega subunit. When a sigma factor is associated with the core the holoenzyme is formed, which can initiate transcription.

It catalyses the reaction RNA(n) + a ribonucleoside 5'-triphosphate = RNA(n+1) + diphosphate. Functionally, DNA-dependent RNA polymerase catalyzes the transcription of DNA into RNA using the four ribonucleoside triphosphates as substrates. The chain is DNA-directed RNA polymerase subunit beta from Thermus thermophilus (strain ATCC BAA-163 / DSM 7039 / HB27).